We begin with the raw amino-acid sequence, 187 residues long: Homeobox expressed in ES cells 1-B (187 aa).

Residues 110 to 169 (GRRPRTAFTRSQIEILENVFRVNSYPGIDVREELASKLALDEDRIQIWFQNRRAKLKRSH) constitute a DNA-binding region (homeobox).

It belongs to the ANF homeobox family. As to quaternary structure, the N-terminus interacts with the LIM 2 domain of zyx. As to expression, first expressed at a low level in the late blastula stage (stage 9) in most cells of the animal half of the embryo. Following this, predominantly expressed in two zones; the dorsal blastopore lip (Spemann organizer) at the beginning of gastrulation, and subsequently in the anterior part of the neural anlage (the region of future forebrain).

It is found in the nucleus. Its function is as follows. Regulates the earliest stages of development of the anterior neural plate. Plays a role in forebrain development by inhibiting the expression of otx2 and pax6 in the rostral region of the anterior neural plate. Necessary for both neural differentiation and neural patterning. Controls Spemann organizer development. May act as a transcriptional repressor. The polypeptide is Homeobox expressed in ES cells 1-B (hesx1-b) (Xenopus laevis (African clawed frog)).